The following is a 130-amino-acid chain: Small ribosomal subunit protein uS9 (130 aa).

The interval 98–130 (LKRAGLLTRDPRMKERKKPGLKKARRSPQFSKR) is disordered. Over residues 111–130 (KERKKPGLKKARRSPQFSKR) the composition is skewed to basic residues.

It belongs to the universal ribosomal protein uS9 family.

The protein is Small ribosomal subunit protein uS9 of Staphylococcus epidermidis (strain ATCC 35984 / DSM 28319 / BCRC 17069 / CCUG 31568 / BM 3577 / RP62A).